The following is a 415-amino-acid chain: rRNA methyltransferase 3, mitochondrial (415 aa).

The N-terminal 47 residues, 1 to 47 (MAALCRGTVRACILKPLGLSVSLQVKRNVRALRRTPVRVLPAAEKGR), are a transit peptide targeting the mitochondrion. Residues 41-73 (PAAEKGRERKEVEARRPQQPRQSEYQTRTSQGV) are disordered. A compositionally biased stretch (basic and acidic residues) spans 44-56 (EKGRERKEVEARR). Residues 59-73 (QPRQSEYQTRTSQGV) are compositionally biased toward polar residues. S-adenosyl-L-methionine contacts are provided by Gly-357, Ile-381, and Leu-390.

The protein belongs to the class IV-like SAM-binding methyltransferase superfamily. RNA methyltransferase TrmH family.

The protein resides in the mitochondrion. It catalyses the reaction a uridine in rRNA + S-adenosyl-L-methionine = a 2'-O-methyluridine in rRNA + S-adenosyl-L-homocysteine + H(+). In terms of biological role, S-adenosyl-L-methionine-dependent 2'-O-ribose methyltransferase that catalyzes the formation of 2'-O-methylguanosine at position 1370 (Gm1370) in the mitochondrial large subunit ribosomal RNA (mtLSU rRNA), a conserved modification in the peptidyl transferase domain of the mtLSU rRNA. Also required for formation of 2'-O-methyluridine at position 1369 (Um1369) mediated by MRM2. The protein is rRNA methyltransferase 3, mitochondrial of Xenopus tropicalis (Western clawed frog).